The primary structure comprises 298 residues: Cholesterol 25-hydroxylase (298 aa).

N-linked (GlcNAc...) asparagine glycosylation occurs at asparagine 5. 3 consecutive transmembrane segments (helical) span residues 38–58 (FFPV…FVVL), 84–104 (LLPC…PVTL), and 124–144 (LLSH…AWHL). The Fatty acid hydroxylase domain maps to 128-263 (VLICLLLFDT…FTHWDKMLGT (136 aa)). The short motif at 142–146 (WHLLH) is the Histidine box-1 element. The Histidine box-2 signature appears at 157–161 (HKVHH). A glycan (N-linked (GlcNAc...) asparagine) is linked at asparagine 163. 2 helical membrane-spanning segments follow: residues 167-187 (FALA…FFDV) and 190-210 (VAML…NIWL). The Histidine box-3 motif lies at 238 to 244 (HHDLHHS).

It belongs to the sterol desaturase family. Fe cation serves as cofactor. In terms of processing, N-glycosylated. As to expression, expressed in testicular macrophages at all stages, with the highest level in 10 day old animals.

It is found in the endoplasmic reticulum membrane. It carries out the reaction cholesterol + AH2 + O2 = 25-hydroxycholesterol + A + H2O. The enzyme catalyses cholesterol + NADPH + O2 + H(+) = 25-hydroxycholesterol + NADP(+) + H2O. Its function is as follows. Catalyzes the formation of 25-hydroxycholesterol from cholesterol, leading to repress cholesterol biosynthetic enzymes. Plays a key role in cell positioning and movement in lymphoid tissues: 25-hydroxycholesterol is an intermediate in biosynthesis of 7-alpha,25-dihydroxycholesterol (7-alpha,25-OHC), an oxysterol that acts as a ligand for the G protein-coupled receptor GPR183/EBI2, a chemotactic receptor for a number of lymphoid cells. May play an important role in regulating lipid metabolism by synthesizing a corepressor that blocks sterol regulatory element binding protein (SREBP) processing. In testis, production of 25-hydroxycholesterol by macrophages plays a role in Leydig cell differentiation. Required to restrain inflammation in macrophages: production of 25-hydroxycholesterol protects macrophages from cholesterol overload, thereby preventing mitochondrial DNA release and subsequent activation of the AIM2 inflammasome. Interferon-stimulated gene which has broad antiviral activities against a wide range of enveloped viruses. Catalyzes the formation of 25-hydroxycholesterol from cholesterol, leading to repress cholesterol biosynthetic enzymes. Plays a key role in cell positioning and movement in lymphoid tissues: 25-hydroxycholesterol is an intermediate in biosynthesis of 7-alpha,25-dihydroxycholesterol (7-alpha,25-OHC), an oxysterol that acts as a ligand for the G protein-coupled receptor GPR183/EBI2, a chemotactic receptor for a number of lymphoid cells. May play an important role in regulating lipid metabolism by synthesizing a corepressor that blocks sterol regulatory element binding protein (SREBP) processing. As an interferon-stimulated gene, has broad antiviral activities against a wide range of enveloped viruses. Its product, 25-hydroxycholesterol, activates the ER-localized enzyme ACAT to induce internalization of accessible cholesterol on the plasma membrane and restricts virus-host membranes fusion which inhibits virus replication. In testis, production of 25-hydroxycholesterol by macrophages plays a role in Leydig cell differentiation. The protein is Cholesterol 25-hydroxylase of Rattus norvegicus (Rat).